The sequence spans 122 residues: Large ribosomal subunit protein bL12 (122 aa).

This sequence belongs to the bacterial ribosomal protein bL12 family. In terms of assembly, homodimer. Part of the ribosomal stalk of the 50S ribosomal subunit. Forms a multimeric L10(L12)X complex, where L10 forms an elongated spine to which 2 to 4 L12 dimers bind in a sequential fashion. Binds GTP-bound translation factors.

Forms part of the ribosomal stalk which helps the ribosome interact with GTP-bound translation factors. Is thus essential for accurate translation. In Levilactobacillus brevis (strain ATCC 367 / BCRC 12310 / CIP 105137 / JCM 1170 / LMG 11437 / NCIMB 947 / NCTC 947) (Lactobacillus brevis), this protein is Large ribosomal subunit protein bL12.